The sequence spans 51 residues: Sperm protamine P1 (51 aa).

This sequence belongs to the protamine P1 family. Cross-linked by interchain disulfide bonds around the DNA-helix. In terms of tissue distribution, testis.

The protein resides in the nucleus. It is found in the chromosome. Protamines substitute for histones in the chromatin of sperm during the haploid phase of spermatogenesis. They compact sperm DNA into a highly condensed, stable and inactive complex. The sequence is that of Sperm protamine P1 (PRM1) from Hylobates lar (Lar gibbon).